Reading from the N-terminus, the 660-residue chain is DNA mismatch repair protein MutL (660 aa).

It belongs to the DNA mismatch repair MutL/HexB family.

This protein is involved in the repair of mismatches in DNA. It is required for dam-dependent methyl-directed DNA mismatch repair. May act as a 'molecular matchmaker', a protein that promotes the formation of a stable complex between two or more DNA-binding proteins in an ATP-dependent manner without itself being part of a final effector complex. The chain is DNA mismatch repair protein MutL from Streptococcus pyogenes serotype M3 (strain ATCC BAA-595 / MGAS315).